Reading from the N-terminus, the 111-residue chain is Complement inhibitor CirpT1 (111 aa).

The first 19 residues, 1 to 19, serve as a signal peptide directing secretion; it reads MATLIAARTKRKAPRVRIF. 4 disulfides stabilise this stretch: cysteine 40-cysteine 64, cysteine 59-cysteine 98, cysteine 76-cysteine 99, and cysteine 85-cysteine 104.

The protein belongs to the CirpT family. In terms of tissue distribution, expressed in salivary glands.

It localises to the secreted. Functionally, complement inhibitor. Prevents complement-mediated activation of C5 by sterically preventing direct binding of C5 to its convertase (binding with domains MG4 and MG5). Binds C5 at a different binding site than the other tick complement inhibitors OmCI and RaCI3, and the drug eculizumab. Inhibits the complement in human, rat and guinea pig, and also shows a reduced inhibition in rabbit and pig. In Rhipicephalus pulchellus (Yellow backed tick), this protein is Complement inhibitor CirpT1.